A 417-amino-acid chain; its full sequence is Phosphoglycerate kinase 1 (417 aa).

Ser-2 is subject to N-acetylserine. Ser-2 and Ser-4 each carry phosphoserine. Lys-6 is subject to N6-succinyllysine. N6-acetyllysine is present on Lys-11. (2R)-3-phosphoglycerate is bound by residues Val-23, Asp-24, Phe-25, Asn-26, Gln-38, and Arg-39. The interval Gln-38–Ala-43 is mitochondrial targeting region exposed following cis-trans isomerization by PIN1 and recognized by the TOM complex for mitochondrial translocation of the protein. Lys-48 is subject to N6-acetyllysine; alternate. Lys-48 carries the post-translational modification N6-succinyllysine; alternate. (2R)-3-phosphoglycerate-binding residues include Ser-62, His-63, Gly-65, and Arg-66. N6-acetyllysine is present on Lys-75. Tyr-76 is modified (phosphotyrosine). N6-acetyllysine occurs at positions 86 and 91. Lys-97 bears the N6-acetyllysine; alternate mark. Lys-97 is modified (N6-(2-hydroxyisobutyryl)lysine; alternate). Residues Leu-122 and Arg-123 each coordinate (2R)-3-phosphoglycerate. N6-acetyllysine; alternate is present on Lys-131. Lys-131 carries the post-translational modification N6-malonyllysine; alternate. N6-acetyllysine is present on Lys-146. (2R)-3-phosphoglycerate contacts are provided by His-170 and Arg-171. Residue Lys-191 is modified to N6-succinyllysine. Tyr-196 is subject to Phosphotyrosine. Lys-199 carries the N6-acetyllysine modification. Residue Ser-203 is modified to Phosphoserine. Gly-214 contributes to the ADP binding site. Position 214 (Gly-214) interacts with CDP. AMP-binding residues include Ala-215 and Lys-216. ATP is bound at residue Ala-215. Position 215 (Ala-215) interacts with Mg(2+). Lys-216 carries the N6-(2-hydroxyisobutyryl)lysine modification. Mg(2+) is bound by residues Ala-218 and Asp-219. Residue Asp-219 coordinates CDP. Lys-220 serves as a coordination point for AMP. Lys-220 contacts ATP. Lys-220 bears the N6-(2-hydroxyisobutyryl)lysine mark. Gly-238 contributes to the ADP binding site. Gly-238 is a binding site for CDP. Gly-239 contacts AMP. Residue Gly-239 participates in ATP binding. Lys-267 and Lys-291 each carry N6-acetyllysine. Residue Gly-313 participates in AMP binding. Residue Gly-313 participates in ATP binding. Residue Lys-323 is modified to N6-(2-hydroxyisobutyryl)lysine. Residues Gly-338, Val-340, and Phe-343 each contribute to the CDP site. Phe-343 contributes to the ADP binding site. AMP is bound at residue Glu-344. Residue Glu-344 participates in ATP binding. Position 361 is an N6-acetyllysine (Lys-361). ATP-binding residues include Asp-375 and Thr-376. Mg(2+) is bound at residue Asp-375.

Belongs to the phosphoglycerate kinase family. In terms of assembly, monomer. Interacts with kinase MAPK1/ERK2; the interaction is direct, occurs under hypoxic conditions, and promotes its interaction with PIN1. Interacts with peptidyl-prolyl cis-trans isomerase PIN1; the interaction is direct, occurs under hypoxic conditions, and targets the protein to the mitochondrion by promoting interactions with the TOM complex. Interacts with mitochondrial circRNA mcPGK1 (via its 2nd stem-loop); the interaction is direct and targets the protein to the mitochondrion by promoting interactions with the TOM complex. Interacts with pyruvate dehydrogenase kinase PDK1; the interaction is direct, occurs under hypoxic conditions and leads to PDK1-mediated inhibition of pyruvate dehydrogenase complex activity. The cofactor is Mg(2+). Phosphorylated at Ser-203 by MAPK1/ERK2 under hypoxic conditions, which promotes its mitochondrial targeting.

It is found in the cytoplasm. The protein resides in the cytosol. It localises to the mitochondrion matrix. The catalysed reaction is (2R)-3-phosphoglycerate + ATP = (2R)-3-phospho-glyceroyl phosphate + ADP. The enzyme catalyses L-seryl-[protein] + ATP = O-phospho-L-seryl-[protein] + ADP + H(+). It functions in the pathway carbohydrate degradation; glycolysis; pyruvate from D-glyceraldehyde 3-phosphate: step 2/5. Its function is as follows. Catalyzes one of the two ATP producing reactions in the glycolytic pathway via the reversible conversion of 1,3-diphosphoglycerate to 3-phosphoglycerate. Both L- and D- forms of purine and pyrimidine nucleotides can be used as substrates, but the activity is much lower on pyrimidines. In addition to its role as a glycolytic enzyme, it seems that PGK-1 acts as a polymerase alpha cofactor protein (primer recognition protein). Acts as a protein kinase when localized to the mitochondrion where it phosphorylates pyruvate dehydrogenase kinase PDK1 to inhibit pyruvate dehydrogenase complex activity and suppress the formation of acetyl-coenzyme A from pyruvate, and consequently inhibit oxidative phosphorylation and promote glycolysis. May play a role in sperm motility. The protein is Phosphoglycerate kinase 1 (PGK1) of Sus scrofa (Pig).